We begin with the raw amino-acid sequence, 908 residues long: SH3 and PX domain-containing protein 2B (908 aa).

Positions 5 to 129 constitute a PX domain; it reads RSIVEVKVLD…QFFETRPEDL (125 aa). Tyr-25 is modified (phosphotyrosine). SH3 domains follow at residues 152-211 and 221-280; these read MVLE…GQDG and EEEE…KNSG. Phosphoserine is present on residues Ser-279 and Ser-291. 2 disordered regions span residues 280-300 and 315-366; these read GEPLPPKLGPSSPAHSGALDL and ELLN…PPIP. Basic and acidic residues predominate over residues 315-337; the sequence is ELLNNQRDGRFEGRLVPDGDVKQ. A compositionally biased stretch (basic residues) spans 338 to 347; sequence RSPKMRQRPP. Residues 368–427 form the SH3 3 domain; sequence QVEEEYYTIAEFQTTIPDGISFQAGLKVEVIEKSLSGWWYIQMEDKEGWAPATFIDKYKK. Residues 455–832 form a disordered region; the sequence is TENNTGPEAV…LGPRVTGKVG (378 aa). Composition is skewed to basic and acidic residues over residues 486-499, 516-546, 569-584, 595-606, and 615-625; these read KDWKGGKEAPRKAS, QEEKPSLPPRKESIIKSEEELLERERQKMEP, LARDSRKPEPKLDKSK, CGHKVLAKEVKK, and SKAELSEEKVD. Ser-499 and Ser-528 each carry phosphoserine. Tyr-661 is subject to Phosphotyrosine. Residues 671-684 are compositionally biased toward basic and acidic residues; it reads KSQEKALLDGESHH. Positions 754–764 are enriched in pro residues; that stretch reads VVPPRRPPPPK. Ser-840 bears the Phosphoserine mark. The 62-residue stretch at 847–908 folds into the SH3 4 domain; the sequence is PKDSLYVAVA…IPSNYLRKKP (62 aa).

Belongs to the SH3PXD2 family. Interacts with NOXO1. Interacts (via SH3 domains) with NOXA1; the interaction is direct. Interacts with ADAM15. Interacts with FASLG. Phosphorylated in SRC-transformed cells. In terms of tissue distribution, highly expressed in the stromal-vascular fraction of white adipose tissue with moderate expression in heart, skeletal muscle and the mature adipocyte fraction of white adipose tissue. Also expressed in brain, spleen, kidney and liver. Expressed in white and brown adipose tissues, eye, lung, heart, brain, spleen, stomach, liver and skeletal muscle (at protein level). Not expressed in kidney or bone marrow.

The protein resides in the cytoplasm. The protein localises to the cell projection. Its subcellular location is the podosome. Its function is as follows. Adapter protein involved in invadopodia and podosome formation and extracellular matrix degradation. Binds matrix metalloproteinases (ADAMs), NADPH oxidases (NOXs) and phosphoinositides. Acts as an organizer protein that allows NOX1- or NOX3-dependent reactive oxygen species (ROS) generation and ROS localization. Plays a role in mitotic clonal expansion during the immediate early stage of adipocyte differentiation. The polypeptide is SH3 and PX domain-containing protein 2B (Sh3pxd2b) (Mus musculus (Mouse)).